The following is a 414-amino-acid chain: COUP transcription factor 2 (414 aa).

Residues 1–72 (MAMVVSTWRD…PGGPGSDKQQ (72 aa)) are disordered. Over residues 27–37 (PPVPGPPPGAP) the composition is skewed to pro residues. Residues 38-57 (HTPQTPGQGGPASTPAQTAA) are compositionally biased toward low complexity. The residue at position 51 (Thr-51) is a Phosphothreonine. A compositionally biased stretch (gly residues) spans 58–67 (GGQGGPGGPG). The segment at residues 76 to 151 (HIECVVCGDK…VGMRREAVQR (76 aa)) is a DNA-binding region (nuclear receptor). 2 NR C4-type zinc fingers span residues 79–99 (CVVCGDKSSGKHYGQFTCEGC) and 115–139 (CRANRNCPIDQHHRNQCQYCRLKKC). Residues 117-414 (ANRNCPIDQH…SFNWPYMAIQ (298 aa)) are interaction with ZFPM2. The 227-residue stretch at 177–403 (YLSGYISLLL…TLIRDMLLSG (227 aa)) folds into the NR LBD domain. The interval 337-414 (LQEKSQCALE…SFNWPYMAIQ (78 aa)) is important for dimerization.

The protein belongs to the nuclear hormone receptor family. NR2 subfamily. In terms of assembly, interacts with SQSTM1. Binds DNA as a dimer; homodimer or heterodimer with NR2F6. Interacts with NCOA1, NCOA2, NCOA3 and PPARGC1A. Interacts with ZFPM2. In terms of tissue distribution, ubiquitous. Expressed in the stromal cells of developing fetal ovaries.

Its subcellular location is the nucleus. In terms of biological role, ligand-activated transcription factor. Activated by high concentrations of 9-cis-retinoic acid and all-trans-retinoic acid, but not by dexamethasone, cortisol or progesterone (in vitro). Regulation of the apolipoprotein A-I gene transcription. Binds to DNA site A. May be required to establish ovary identity during early gonad development. The polypeptide is COUP transcription factor 2 (NR2F2) (Homo sapiens (Human)).